The sequence spans 88 residues: uncharacterized protein (88 aa).

The first 22 residues, 1–22 (MLKASILFITISLTLMLENSYG), serve as a signal peptide directing secretion. 3 disulfide bridges follow: Cys59/Cys73, Cys66/Cys77, and Cys72/Cys82.

Its subcellular location is the secreted. This is an uncharacterized protein from Schistosoma japonicum (Blood fluke).